Reading from the N-terminus, the 597-residue chain is Elongation factor 4 (597 aa).

The 183-residue stretch at 2-184 (KHIRNFSIIA…NIVTAIPPPE (183 aa)) folds into the tr-type G domain. GTP is bound by residues 14–19 (DHGKST) and 131–134 (NKID).

Belongs to the TRAFAC class translation factor GTPase superfamily. Classic translation factor GTPase family. LepA subfamily.

It is found in the cell inner membrane. It catalyses the reaction GTP + H2O = GDP + phosphate + H(+). Functionally, required for accurate and efficient protein synthesis under certain stress conditions. May act as a fidelity factor of the translation reaction, by catalyzing a one-codon backward translocation of tRNAs on improperly translocated ribosomes. Back-translocation proceeds from a post-translocation (POST) complex to a pre-translocation (PRE) complex, thus giving elongation factor G a second chance to translocate the tRNAs correctly. Binds to ribosomes in a GTP-dependent manner. This is Elongation factor 4 from Vibrio atlanticus (strain LGP32) (Vibrio splendidus (strain Mel32)).